The primary structure comprises 28 residues: Cliotide T21 (28 aa).

Positions 1-28 form a cross-link, cyclopeptide (Asp-Asn); the sequence is DLQCAETCVHSPCIGPCYCKHGLICYRN. Disulfide bonds link Cys4-Cys17, Cys8-Cys19, and Cys13-Cys25.

Contains 3 disulfide bonds. In terms of processing, this is a cyclic peptide. In terms of tissue distribution, expressed in root nodules but not in seed.

In terms of biological role, probably participates in a plant defense mechanism. Not active against Gram-negative bacterium E.coli ATCC 700926 or Gram-positive bacterium S.aureus ATCC 12600 up to a concentration of 100 uM under low-salt conditions. This chain is Cliotide T21, found in Clitoria ternatea (Butterfly pea).